The following is a 212-amino-acid chain: Hevein-like preproprotein (212 aa).

Residues 1-21 (MKIRLSITIILLSYTVATVAG) form the signal peptide. A Chitin-binding type-1 domain is found at 22–64 (QQCGRQGGGRTCPGNICCSQYGYCGTTADYCSPTNNCQSNCWG). 7 disulfide bridges follow: cysteine 24-cysteine 39, cysteine 33-cysteine 45, cysteine 38-cysteine 52, cysteine 58-cysteine 62, cysteine 100-cysteine 132, cysteine 121-cysteine 155, and cysteine 135-cysteine 191. Residues 72–193 (ESASNVRATY…VDYQFVDCGN (122 aa)) form the Barwin domain.

As to quaternary structure, CB-HEL interacts strongly with a fungal fruiting body lectin.

The protein resides in the vacuole. Its function is as follows. Fungal growth inhibitors. Neither CB-HEL nor CD-HEL have chitinase activity, but both have antimicrobial activities. CD-HEL has RNase, but no DNase activity. In Arabidopsis thaliana (Mouse-ear cress), this protein is Hevein-like preproprotein (HEL).